Reading from the N-terminus, the 426-residue chain is L-cysteine:1D-myo-inositol 2-amino-2-deoxy-alpha-D-glucopyranoside ligase (426 aa).

A Zn(2+)-binding site is contributed by C43. Residues 43–46 (CGIT), S58, and 81–83 (NVT) each bind L-cysteinyl-5'-AMP. A 'HIGH' region motif is present at residues 45-55 (ITPYDATHMGH). The 'ERGGDP' region signature appears at 200-205 (ERGGDP). W241 provides a ligand contact to L-cysteinyl-5'-AMP. C245 lines the Zn(2+) pocket. 263–265 (GSD) is a binding site for L-cysteinyl-5'-AMP. H270 provides a ligand contact to Zn(2+). V296 provides a ligand contact to L-cysteinyl-5'-AMP. Residues 302–306 (KMSKS) carry the 'KMSKS' region motif.

It belongs to the class-I aminoacyl-tRNA synthetase family. MshC subfamily. In terms of assembly, monomer. It depends on Zn(2+) as a cofactor.

It carries out the reaction 1D-myo-inositol 2-amino-2-deoxy-alpha-D-glucopyranoside + L-cysteine + ATP = 1D-myo-inositol 2-(L-cysteinylamino)-2-deoxy-alpha-D-glucopyranoside + AMP + diphosphate + H(+). In terms of biological role, catalyzes the ATP-dependent condensation of GlcN-Ins and L-cysteine to form L-Cys-GlcN-Ins. The sequence is that of L-cysteine:1D-myo-inositol 2-amino-2-deoxy-alpha-D-glucopyranoside ligase from Arthrobacter sp. (strain FB24).